We begin with the raw amino-acid sequence, 624 residues long: DNA mismatch repair protein MutL (624 aa).

The protein belongs to the DNA mismatch repair MutL/HexB family.

Functionally, this protein is involved in the repair of mismatches in DNA. It is required for dam-dependent methyl-directed DNA mismatch repair. May act as a 'molecular matchmaker', a protein that promotes the formation of a stable complex between two or more DNA-binding proteins in an ATP-dependent manner without itself being part of a final effector complex. This is DNA mismatch repair protein MutL from Xanthomonas campestris pv. campestris (strain B100).